A 190-amino-acid polypeptide reads, in one-letter code: UPF0149 protein NT01EI_3357 (190 aa).

Belongs to the UPF0149 family.

This chain is UPF0149 protein NT01EI_3357, found in Edwardsiella ictaluri (strain 93-146).